A 544-amino-acid polypeptide reads, in one-letter code: CTP synthase (544 aa).

The tract at residues 1 to 265 (MTRYIFITGG…DTQVLAYFGL (265 aa)) is amidoligase domain. Residue Ser13 participates in CTP binding. Ser13 is a binding site for UTP. 14–19 (SLGKGL) contributes to the ATP binding site. Position 54 (Tyr54) interacts with L-glutamine. Asp71 contacts ATP. Positions 71 and 139 each coordinate Mg(2+). Residues 146-148 (DIE), 186-191 (KTKPTQ), and Lys222 contribute to the CTP site. Residues 186 to 191 (KTKPTQ) and Lys222 each bind UTP. Val240 is an ATP binding site. The region spanning 291 to 543 (TIAVVGKYTS…IKAAIEQSRL (253 aa)) is the Glutamine amidotransferase type-1 domain. Gly353 contacts L-glutamine. The Nucleophile; for glutamine hydrolysis role is filled by Cys380. Residues 381–384 (FGMQ), Glu404, and Arg472 contribute to the L-glutamine site. Active-site residues include His516 and Glu518.

The protein belongs to the CTP synthase family. In terms of assembly, homotetramer.

It catalyses the reaction UTP + L-glutamine + ATP + H2O = CTP + L-glutamate + ADP + phosphate + 2 H(+). The enzyme catalyses L-glutamine + H2O = L-glutamate + NH4(+). The catalysed reaction is UTP + NH4(+) + ATP = CTP + ADP + phosphate + 2 H(+). The protein operates within pyrimidine metabolism; CTP biosynthesis via de novo pathway; CTP from UDP: step 2/2. Allosterically activated by GTP, when glutamine is the substrate; GTP has no effect on the reaction when ammonia is the substrate. The allosteric effector GTP functions by stabilizing the protein conformation that binds the tetrahedral intermediate(s) formed during glutamine hydrolysis. Inhibited by the product CTP, via allosteric rather than competitive inhibition. Catalyzes the ATP-dependent amination of UTP to CTP with either L-glutamine or ammonia as the source of nitrogen. Regulates intracellular CTP levels through interactions with the four ribonucleotide triphosphates. The sequence is that of CTP synthase from Azospirillum brasilense.